Reading from the N-terminus, the 669-residue chain is Phosphatidylinositol-3-phosphate phosphatase MTMR1 (669 aa).

Methionine 1 is subject to N-acetylmethionine. A compositionally biased stretch (low complexity) spans 1–17 (MDRPVAAAAAASAASCE). The tract at residues 1 to 55 (MDRPVAAAAAASAASCEGAGGPGPGPGASWRPSRVAGGASASSRHPSIETLDSPT) is disordered. A phosphoserine mark is found at serine 47 and serine 53. Residues 94–165 (NKLAQMEEAP…GVISRVEKIG (72 aa)) enclose the GRAM domain. The region spanning 230 to 605 (GWKVYDPVSE…SHLELWVNYY (376 aa)) is the Myotubularin phosphatase domain. Asparagine 355, asparagine 380, and isoleucine 381 together coordinate a 1,2-diacyl-sn-glycero-3-phospho-(1D-myo-inositol-3-phosphate). Cysteine 442 acts as the Phosphocysteine intermediate in catalysis. Residues serine 443, aspartate 444, glycine 445, tryptophan 446, aspartate 447, arginine 448, and arginine 488 each coordinate a 1,2-diacyl-sn-glycero-3-phospho-(1D-myo-inositol-3-phosphate). Serine 443 contacts phosphate. Residues glycine 445, tryptophan 446, aspartate 447, and arginine 448 each coordinate phosphate. The segment at 612–669 (MRPQMPIHQNLKELLAIKAELQKRVEDLQREMATRTISSSSERGSSPTHSATPVHTSV) is required for dimerization. The tract at residues 644-669 (ATRTISSSSERGSSPTHSATPVHTSV) is disordered. A compositionally biased stretch (low complexity) spans 649–661 (SSSSERGSSPTHS).

It belongs to the protein-tyrosine phosphatase family. Non-receptor class myotubularin subfamily. As to quaternary structure, homodimer. In terms of tissue distribution, widely expressed. Detected in skeletal muscle, heart, lung, liver and brain.

The protein localises to the cell membrane. The protein resides in the cytoplasm. The catalysed reaction is a 1,2-diacyl-sn-glycero-3-phospho-(1D-myo-inositol-3-phosphate) + H2O = a 1,2-diacyl-sn-glycero-3-phospho-(1D-myo-inositol) + phosphate. It carries out the reaction 1,2-dioctanoyl-sn-glycero-3-phospho-(1-D-myo-inositol-3-phosphate) + H2O = 1,2-dioctanoyl-sn-glycero-3-phospho-(1D-myo-inositol) + phosphate. It catalyses the reaction a 1,2-diacyl-sn-glycero-3-phospho-(1D-myo-inositol-3,5-bisphosphate) + H2O = a 1,2-diacyl-sn-glycero-3-phospho-(1D-myo-inositol-5-phosphate) + phosphate. Functionally, lipid phosphatase that specifically dephosphorylates the D-3 position of phosphatidylinositol 3-phosphate, generating phosphatidylinositol. Could also dephosphorylate phosphatidylinositol 3,5-bisphosphate to produce phosphatidylinositol 5-phosphate. This Mus musculus (Mouse) protein is Phosphatidylinositol-3-phosphate phosphatase MTMR1.